Here is a 187-residue protein sequence, read N- to C-terminus: GMP synthase [glutamine-hydrolyzing] subunit A (187 aa).

One can recognise a Glutamine amidotransferase type-1 domain in the interval 1 to 187 (MILIIDNHGQ…KNFAKLCGEL (187 aa)). The active-site Nucleophile is Cys-76. Active-site residues include His-164 and Glu-166.

In terms of assembly, heterodimer composed of a glutamine amidotransferase subunit (A) and a GMP-binding subunit (B).

The catalysed reaction is XMP + L-glutamine + ATP + H2O = GMP + L-glutamate + AMP + diphosphate + 2 H(+). It functions in the pathway purine metabolism; GMP biosynthesis; GMP from XMP (L-Gln route): step 1/1. Catalyzes the synthesis of GMP from XMP. This is GMP synthase [glutamine-hydrolyzing] subunit A from Methanopyrus kandleri (strain AV19 / DSM 6324 / JCM 9639 / NBRC 100938).